We begin with the raw amino-acid sequence, 430 residues long: Adenylosuccinate synthetase (430 aa).

GTP contacts are provided by residues 12–18 (GDEGKGK) and 40–42 (GHT). The Proton acceptor role is filled by aspartate 13. 2 residues coordinate Mg(2+): aspartate 13 and glycine 40. IMP is bound by residues 13–16 (DEGK), 38–41 (NAGH), threonine 130, arginine 144, glutamine 224, threonine 239, and arginine 303. Residue histidine 41 is the Proton donor of the active site. Substrate is bound at residue 299 to 305 (TVTGRKR). Residues arginine 305, 331-333 (KLD), and 413-415 (STS) each bind GTP.

The protein belongs to the adenylosuccinate synthetase family. Homodimer. The cofactor is Mg(2+).

It localises to the cytoplasm. The enzyme catalyses IMP + L-aspartate + GTP = N(6)-(1,2-dicarboxyethyl)-AMP + GDP + phosphate + 2 H(+). It functions in the pathway purine metabolism; AMP biosynthesis via de novo pathway; AMP from IMP: step 1/2. Plays an important role in the de novo pathway of purine nucleotide biosynthesis. Catalyzes the first committed step in the biosynthesis of AMP from IMP. This Paracoccus denitrificans (strain Pd 1222) protein is Adenylosuccinate synthetase.